The sequence spans 983 residues: Serine/threonine-protein kinase N2 (983 aa).

An REM-1 1 domain is found at 33–109; the sequence is KLDFSDTMVQ…LQELNAHIVV (77 aa). An N6-acetyllysine modification is found at K77. Positions 107–135 are disordered; the sequence is IVVSDPEDSTDCPRTPDTPNSDSRSSTSN. S110 is modified (phosphoserine). Phosphothreonine is present on residues T121 and T124. Residues 121 to 135 are compositionally biased toward low complexity; the sequence is TPDTPNSDSRSSTSN. REM-1 domains lie at 121 to 203 and 204 to 284; these read TPDT…TNEL and AFDN…ELPR. Phosphoserine occurs at positions 301, 305, 359, and 361. Positions 351-382 are disordered; sequence TSVALPGWSPSDNRSSFMSRTSKSKSGSSRNL. The region spanning 352–472 is the C2 domain; that stretch reads SVALPGWSPS…LYLEPQGTLF (121 aa). Low complexity predominate over residues 364 to 380; the sequence is RSSFMSRTSKSKSGSSR. The interval 381–462 is necessary to rescue apical junction formation; the sequence is NLLKTDDLSN…FLDNQRHGMC (82 aa). A phosphoserine mark is found at S534, S582, S619, and S630. The tract at residues 553–588 is disordered; that stretch reads LAPPASDSTVTKLDFDLEPEPPPAPPRASSLGETDE. The 260-residue stretch at 656–915 folds into the Protein kinase domain; sequence FRCCAVLGRG…AEDVKKHPFF (260 aa). ATP-binding positions include 662-670 and K685; that span reads LGRGHFGKV. D781 acts as the Proton acceptor in catalysis. Residue T815 is modified to Phosphothreonine; by PDPK1. Residues 916–976 form a necessary for the catalytic activity region; the sequence is RLTDWSALMD…EEEQEMFHDF (61 aa). Residues 916 to 983 enclose the AGC-kinase C-terminal domain; sequence RLTDWSALMD…HDFDYVADWC (68 aa). Position 951 is a phosphoserine (S951). The residue at position 957 (T957) is a Phosphothreonine. A negatively regulates the responsiveness of the catalytic activity by cardiolipin and is required for optimal activation by the GTP-bound RhoA region spans residues 977–983; it reads DYVADWC.

Belongs to the protein kinase superfamily. AGC Ser/Thr protein kinase family. PKC subfamily. In terms of assembly, interacts (via the REM repeats) with RHOA (GTP-bound form preferentially) and interacts (via the REM repeats) with RAC1 (GTP-bound form preferentially); the interactions induce its autophosphorylation. Interacts with NCK1 (via SH3 domains). Interacts with RHOC. Interacts with NCK1 and NCK2. Interacts with CD44. Interacts (via C-terminal kinase domain) with PDPK1; the interaction stimulates PDPK1 kinase activity. Interacts with MAP3K2; the interaction activates PRK2 kinase activity in a MAP3K2-independent kinase activity. Interacts (via C-terminal domain) with AKT1; the interaction occurs with the C-terminal cleavage product of PRK2 in apoptotic cells. Interacts (via C-terminus) with PTPN13 (via PDZ 3 domain). Interacts with CDK10. In terms of processing, phosphorylated during mitosis. Autophosphorylated. Phosphorylated. Phosphorylated by CDK10. Activated by limited proteolysis with trypsin. Proteolytically cleaved by caspase-3 during the induction of apoptotic cell death. In terms of tissue distribution, ubiquitous. Highly expressed in liver and lung Expressed in astrocytes (at protein level). Ubiquitous.

The protein localises to the cytoplasm. Its subcellular location is the nucleus. The protein resides in the membrane. It is found in the cell projection. It localises to the lamellipodium. The protein localises to the cytoskeleton. Its subcellular location is the cleavage furrow. The protein resides in the midbody. It is found in the cell junction. It catalyses the reaction L-seryl-[protein] + ATP = O-phospho-L-seryl-[protein] + ADP + H(+). It carries out the reaction L-threonyl-[protein] + ATP = O-phospho-L-threonyl-[protein] + ADP + H(+). Kinase activity is activated upon binding to GTP-bound Rho1/Rac1 GTPases. Activated by caspase-3 (CASP3) cleavage during apoptosis. Activated by lipids, particularly cardiolipin and to a lesser extent by other acidic phospholipids and unsaturated fatty acids. Two specific sites, Thr-815 (activation loop of the kinase domain) and Thr-957 (turn motif), need to be phosphorylated for its full activation. Its function is as follows. PKC-related serine/threonine-protein kinase and Rho/Rac effector protein that participates in specific signal transduction responses in the cell. Plays a role in the regulation of cell cycle progression, actin cytoskeleton assembly, cell migration, cell adhesion, tumor cell invasion and transcription activation signaling processes. Phosphorylates CTTN in hyaluronan-induced astrocytes and hence decreases CTTN ability to associate with filamentous actin. Phosphorylates HDAC5, therefore lead to impair HDAC5 import. Direct RhoA target required for the regulation of the maturation of primordial junctions into apical junction formation in bronchial epithelial cells. Required for G2/M phases of the cell cycle progression and abscission during cytokinesis in a ECT2-dependent manner. Stimulates FYN kinase activity that is required for establishment of skin cell-cell adhesion during keratinocytes differentiation. Regulates epithelial bladder cells speed and direction of movement during cell migration and tumor cell invasion. Inhibits Akt pro-survival-induced kinase activity. Mediates Rho protein-induced transcriptional activation via the c-fos serum response factor (SRF). Involved in the negative regulation of ciliogenesis. This is Serine/threonine-protein kinase N2 (Pkn2) from Mus musculus (Mouse).